A 325-amino-acid chain; its full sequence is uncharacterized protein (325 aa).

Residues 1-32 (MKQEYIPLDEFPNKSNEGMLNDEGTSSSGLST) are disordered. The span at 23 to 32 (EGTSSSGLST) shows a compositional bias: low complexity. The stretch at 135–223 (AEEISNLKTS…LKKREDLLRL (89 aa)) forms a coiled coil.

It is found in the cytoplasm. The protein resides in the cytoskeleton. Its subcellular location is the microtubule organizing center. It localises to the spindle pole body. This is an uncharacterized protein from Schizosaccharomyces pombe (strain 972 / ATCC 24843) (Fission yeast).